Reading from the N-terminus, the 387-residue chain is Phosphoglycerate kinase (387 aa).

Substrate is bound by residues 21–23 (DLN), R36, 59–62 (HLGR), R114, and R147. ATP-binding positions include K198, E314, and 340–343 (GGDT).

The protein belongs to the phosphoglycerate kinase family. In terms of assembly, monomer.

The protein resides in the cytoplasm. The enzyme catalyses (2R)-3-phosphoglycerate + ATP = (2R)-3-phospho-glyceroyl phosphate + ADP. The protein operates within carbohydrate degradation; glycolysis; pyruvate from D-glyceraldehyde 3-phosphate: step 2/5. The protein is Phosphoglycerate kinase of Erwinia tasmaniensis (strain DSM 17950 / CFBP 7177 / CIP 109463 / NCPPB 4357 / Et1/99).